Reading from the N-terminus, the 493-residue chain is Cytochrome P450 monooxygenase astA (493 aa).

The chain crosses the membrane as a helical span at residues 5–25 (EIILLGLAALAVTYQVIVWIY). Asn-174 and Asn-286 each carry an N-linked (GlcNAc...) asparagine glycan. Cys-433 contacts heme.

Belongs to the cytochrome P450 family. It depends on heme as a cofactor.

Its subcellular location is the membrane. The enzyme catalyses asperterpenoid A + reduced [NADPH--hemoprotein reductase] + O2 = asperterpenoid C + oxidized [NADPH--hemoprotein reductase] + H2O + H(+). It functions in the pathway secondary metabolite biosynthesis; terpenoid biosynthesis. Cytochrome P450 monooxygenase; part of the gene cluster that mediates the biosynthesis of the asperterpenoids, sesterterpenes that exhibit anti-tuberculosis activity. The first step of the pathway is performed by the sesterterpene synthase astC that possesses both prenyl transferase and terpene cyclase activity, converting isopentenyl diphosphate and dimethylallyl diphosphate into geranylfarnesyl diphosphate (GFPP) and further converting GFPP into preasperterpenoid A, respectively. The cytochrome P450 monooxygenase astB then dually oxidizes preasperterpenoid A to produce asperterpenoid A along with a minor product, asperterpenoid B. Finally, the cytochrome P450 monooxygenase astA converts asperterpenoid A into asperterpenoid C. The polypeptide is Cytochrome P450 monooxygenase astA (Talaromyces wortmannii (Penicillium wortmannii)).